The primary structure comprises 496 residues: MLHTEGHALLRAVGQGKLRLARLLLEGGAYVNEGDAQGETALMAACRARYDDPQNKARMVRYLLEQGADPNIADRLGRTALMHACAGGGGAAVASLLLAHGADPSVRDHAGASALVHALDRGDRETLATLLDACKAKGTEVIIITTDTSPSGTKKTRQYLNSPPSPGVEDPAPASPSPGFCTSPSEIQLQTAGGGGRGMLSPRAQEEEEKRDVFEFPLPKPPDDPSPSEPLPKPPRHPPKPLKRLNSEPWGLVAPPQPVPPTEGRPGIERLTAEFNGLTLTGRPRLSRRHSTEGPEDPPPWAEKVTSGGPLSRRNTAPEAQESGPPSGLRQKLSRMEPVELDTPGHLCPDSPESSRLSLERRRYSASPLTLPPAGSAPSPRQSQESLPGAVSPLSGRRRSPGLLERRGSGTLLLDHISQTRPGFLPPLNVSPHPPIPDIRPQPGGRAPSLPAPPYAGAPGSPRTKRKLVRRHSMQTEQIRLLGGFQSLGGPGEPGR.

ANK repeat units follow at residues 4-33 (TEGHALLRAVGQGKLRLARLLLEGGAYVNE), 37-72 (QGETALMAACRARYDDPQNKARMVRYLLEQGADPNI), 76-106 (LGRTALMHACAGGGGAAVASLLLAHGADPSV), and 110-139 (AGASALVHALDRGDRETLATLLDACKAKGT). At Gln15 the chain carries N5-methylglutamine. 2 stretches are compositionally biased toward polar residues: residues 147 to 162 (DTSPSGTKKTRQYLNS) and 180 to 191 (FCTSPSEIQLQT). A disordered region spans residues 147–473 (DTSPSGTKKT…TKRKLVRRHS (327 aa)). A compositionally biased stretch (basic and acidic residues) spans 204–214 (AQEEEEKRDVF). The span at 218-233 (LPKPPDDPSPSEPLPK) shows a compositional bias: pro residues. Positions 234-243 (PPRHPPKPLK) are enriched in basic residues. Thr316 is modified (phosphothreonine). The span at 463 to 473 (RTKRKLVRRHS) shows a compositional bias: basic residues.

The protein belongs to the ANKRD34 family. In terms of processing, methylated at Gln-15 by N6AMT1.

This Homo sapiens (Human) protein is Ankyrin repeat domain-containing protein 34A (ANKRD34A).